The primary structure comprises 120 residues: Large ribosomal subunit protein bL12 (120 aa).

Belongs to the bacterial ribosomal protein bL12 family. As to quaternary structure, homodimer. Part of the ribosomal stalk of the 50S ribosomal subunit. Forms a multimeric L10(L12)X complex, where L10 forms an elongated spine to which 2 to 4 L12 dimers bind in a sequential fashion. Binds GTP-bound translation factors.

Functionally, forms part of the ribosomal stalk which helps the ribosome interact with GTP-bound translation factors. Is thus essential for accurate translation. This chain is Large ribosomal subunit protein bL12, found in Clostridium botulinum (strain Alaska E43 / Type E3).